The primary structure comprises 168 residues: Protein-export protein SecB (168 aa).

It belongs to the SecB family. Homotetramer, a dimer of dimers. One homotetramer interacts with 1 SecA dimer.

Its subcellular location is the cytoplasm. Its function is as follows. One of the proteins required for the normal export of preproteins out of the cell cytoplasm. It is a molecular chaperone that binds to a subset of precursor proteins, maintaining them in a translocation-competent state. It also specifically binds to its receptor SecA. The chain is Protein-export protein SecB from Haemophilus influenzae (strain PittGG).